The chain runs to 291 residues: MSALQRTPQPASLAERLADLAVDALIDEADLSPKPALVDRCSNGAHTDLHLGLMHSSALSLWPTFKLMADAAAQFQAVGEPLREALGRLGREGEATMLRTTSGVNTHRGAIWALGLLVTAAALDPQDCGPDAVCQRAASLALIKDRQVLAQNSHGSEVVRRYGVMGAREQAQHGFPAVIRCALPQLQRSRAAGSGEQNARLDALLAIMTTLADTCVLHRAGLEGLQTMQNGAQRVLDAGGSASLAGRRALNQLDQQLLALNASPGGAADLLAACLFIDGLEPALGPVSRSA.

Belongs to the CitG/MdcB family.

The enzyme catalyses 3'-dephospho-CoA + ATP = 2'-(5''-triphospho-alpha-D-ribosyl)-3'-dephospho-CoA + adenine. Functionally, involved in the formation of 2-(5''-phosphoribosyl)-3'-dephosphocoenzyme-A, the prosthetic group of the acyl-carrier protein of the malonate decarboxylase. In Pseudomonas syringae pv. tomato (strain ATCC BAA-871 / DC3000), this protein is Probable 2-(5''-triphosphoribosyl)-3'-dephosphocoenzyme-A synthase.